Here is a 328-residue protein sequence, read N- to C-terminus: Malate dehydrogenase 1 (328 aa).

12 to 18 serves as a coordination point for NAD(+); the sequence is GAAGQIG. The substrate site is built by Arg95 and Arg101. Residues Asn108, Gln115, and 132-134 each bind NAD(+); that span reads VGN. Substrate is bound by residues Asn134 and Arg165. Residue His190 is the Proton acceptor of the active site.

It belongs to the LDH/MDH superfamily. MDH type 2 family.

It carries out the reaction (S)-malate + NAD(+) = oxaloacetate + NADH + H(+). Catalyzes the reversible oxidation of malate to oxaloacetate. The chain is Malate dehydrogenase 1 from Albidiferax ferrireducens (strain ATCC BAA-621 / DSM 15236 / T118) (Rhodoferax ferrireducens).